The chain runs to 702 residues: Arylphorin subunit alpha (702 aa).

Positions 1 to 16 (MKTVVILAGLVALALS) are cleaved as a signal peptide. N-linked (GlcNAc...) asparagine glycosylation is found at N75 and N214.

Belongs to the hemocyanin family. As to quaternary structure, arylphorin is a hexamer of subunits alpha and beta. In terms of tissue distribution, fat body.

Its subcellular location is the secreted. It localises to the extracellular space. Its function is as follows. Arylphorin is a larval storage protein (LSP) which may serve as a storage protein used primarily as a source of aromatic amino acids for protein synthesis during metamorphosis. It is a constituent of the sclerotizing system of the cuticle, and serves as a carrier for ecdysteroid hormone. This Manduca sexta (Tobacco hawkmoth) protein is Arylphorin subunit alpha.